Here is a 648-residue protein sequence, read N- to C-terminus: DNA mismatch repair protein MutL (648 aa).

Residues 336–443 (ERPFEPSSPQ…SGSAGESRAR (108 aa)) form a disordered region. The span at 370 to 381 (SPESKTHSTWNE) shows a compositional bias: polar residues. Residues 383 to 410 (SRVDTSRAETSRESRIDSPLGERTRDIA) are compositionally biased toward basic and acidic residues.

It belongs to the DNA mismatch repair MutL/HexB family.

This protein is involved in the repair of mismatches in DNA. It is required for dam-dependent methyl-directed DNA mismatch repair. May act as a 'molecular matchmaker', a protein that promotes the formation of a stable complex between two or more DNA-binding proteins in an ATP-dependent manner without itself being part of a final effector complex. The chain is DNA mismatch repair protein MutL from Shewanella sp. (strain ANA-3).